A 214-amino-acid polypeptide reads, in one-letter code: Thiamine-phosphate synthase (214 aa).

4-amino-2-methyl-5-(diphosphooxymethyl)pyrimidine-binding positions include 40–44 and Asn72; that span reads QLREK. Mg(2+) is bound by residues Asp73 and Asp92. Ser110 contributes to the 4-amino-2-methyl-5-(diphosphooxymethyl)pyrimidine binding site. Position 137–139 (137–139) interacts with 2-[(2R,5Z)-2-carboxy-4-methylthiazol-5(2H)-ylidene]ethyl phosphate; it reads SPT. Position 140 (Lys140) interacts with 4-amino-2-methyl-5-(diphosphooxymethyl)pyrimidine. 2-[(2R,5Z)-2-carboxy-4-methylthiazol-5(2H)-ylidene]ethyl phosphate contacts are provided by residues Gly167 and 185–186; that span reads IS.

This sequence belongs to the thiamine-phosphate synthase family. Requires Mg(2+) as cofactor.

The enzyme catalyses 2-[(2R,5Z)-2-carboxy-4-methylthiazol-5(2H)-ylidene]ethyl phosphate + 4-amino-2-methyl-5-(diphosphooxymethyl)pyrimidine + 2 H(+) = thiamine phosphate + CO2 + diphosphate. The catalysed reaction is 2-(2-carboxy-4-methylthiazol-5-yl)ethyl phosphate + 4-amino-2-methyl-5-(diphosphooxymethyl)pyrimidine + 2 H(+) = thiamine phosphate + CO2 + diphosphate. It catalyses the reaction 4-methyl-5-(2-phosphooxyethyl)-thiazole + 4-amino-2-methyl-5-(diphosphooxymethyl)pyrimidine + H(+) = thiamine phosphate + diphosphate. The protein operates within cofactor biosynthesis; thiamine diphosphate biosynthesis; thiamine phosphate from 4-amino-2-methyl-5-diphosphomethylpyrimidine and 4-methyl-5-(2-phosphoethyl)-thiazole: step 1/1. Condenses 4-methyl-5-(beta-hydroxyethyl)thiazole monophosphate (THZ-P) and 2-methyl-4-amino-5-hydroxymethyl pyrimidine pyrophosphate (HMP-PP) to form thiamine monophosphate (TMP). This Wolinella succinogenes (strain ATCC 29543 / DSM 1740 / CCUG 13145 / JCM 31913 / LMG 7466 / NCTC 11488 / FDC 602W) (Vibrio succinogenes) protein is Thiamine-phosphate synthase.